Here is a 721-residue protein sequence, read N- to C-terminus: Peroxisomal fatty acid beta-oxidation multifunctional protein AIM1 (721 aa).

Catalysis depends on Glu-116, which acts as the Nucleophile. Residue Glu-136 is the Proton acceptor of the active site. The short motif at 719 to 721 (SKL) is the Microbody targeting signal element.

It in the N-terminal section; belongs to the enoyl-CoA hydratase/isomerase family. This sequence in the central section; belongs to the 3-hydroxyacyl-CoA dehydrogenase family. In terms of tissue distribution, widely expressed.

Its subcellular location is the peroxisome. The enzyme catalyses a (3S)-3-hydroxyacyl-CoA = a (2E)-enoyl-CoA + H2O. It carries out the reaction a 4-saturated-(3S)-3-hydroxyacyl-CoA = a (3E)-enoyl-CoA + H2O. It catalyses the reaction (3S)-3-hydroxybutanoyl-CoA = (2E)-butenoyl-CoA + H2O. The catalysed reaction is (3S)-hydroxyoctanoyl-CoA = (2E)-octenoyl-CoA + H2O. The enzyme catalyses (3S)-3-hydroxydodecanoyl-CoA = (2E)-dodecenoyl-CoA + H2O. It carries out the reaction (3S)-hydroxytetradecanoyl-CoA = (2E)-tetradecenoyl-CoA + H2O. It catalyses the reaction (3S)-hydroxyhexanoyl-CoA = (2E)-hexenoyl-CoA + H2O. The catalysed reaction is a (3Z)-enoyl-CoA = a 4-saturated (2E)-enoyl-CoA. The enzyme catalyses a (3E)-enoyl-CoA = a 4-saturated (2E)-enoyl-CoA. It carries out the reaction (3S)-3-hydroxybutanoyl-CoA = (3R)-3-hydroxybutanoyl-CoA. It catalyses the reaction a (3S)-3-hydroxyacyl-CoA + NAD(+) = a 3-oxoacyl-CoA + NADH + H(+). The catalysed reaction is (3S)-3-hydroxybutanoyl-CoA + NAD(+) = acetoacetyl-CoA + NADH + H(+). The enzyme catalyses (3S)-hydroxyhexanoyl-CoA + NAD(+) = 3-oxohexanoyl-CoA + NADH + H(+). It carries out the reaction (3S)-hydroxyoctanoyl-CoA + NAD(+) = 3-oxooctanoyl-CoA + NADH + H(+). It catalyses the reaction (3S)-3-hydroxydodecanoyl-CoA + NAD(+) = 3-oxododecanoyl-CoA + NADH + H(+). The catalysed reaction is (3S)-hydroxytetradecanoyl-CoA + NAD(+) = 3-oxotetradecanoyl-CoA + NADH + H(+). Its pathway is lipid metabolism; fatty acid beta-oxidation. Involved in peroxisomal fatty acid beta-oxidation. Required for wound-induced jasmonate biosynthesis. Possesses enoyl-CoA hydratase activity against short chain substrates (C4-C6) and 3-hydroxyacyl-CoA dehydrogenase activity against chains of variable sizes (C6-C16). Possesses cinnamoyl-CoA hydratase activity and is involved in the peroxisomal beta-oxidation pathway for the biosynthesis of benzoic acid (BA). Required for the accumulation in seeds of benzoylated glucosinolates (BGs) and substituted hydroxybenzoylated choline esters, which are BA-containing secondary metabolites. Required for salicylic acid (SA) in seeds. The chain is Peroxisomal fatty acid beta-oxidation multifunctional protein AIM1 (AIM1) from Arabidopsis thaliana (Mouse-ear cress).